A 785-amino-acid chain; its full sequence is Endonuclease MutS2 (785 aa).

332–339 (GPNTGGKT) contacts ATP. A Smr domain is found at 710–785 (IDLRGLDAEE…GDGATIVELK (76 aa)).

Belongs to the DNA mismatch repair MutS family. MutS2 subfamily. Homodimer. Binds to stalled ribosomes, contacting rRNA.

Functionally, endonuclease that is involved in the suppression of homologous recombination and thus may have a key role in the control of bacterial genetic diversity. Acts as a ribosome collision sensor, splitting the ribosome into its 2 subunits. Detects stalled/collided 70S ribosomes which it binds and splits by an ATP-hydrolysis driven conformational change. Acts upstream of the ribosome quality control system (RQC), a ribosome-associated complex that mediates the extraction of incompletely synthesized nascent chains from stalled ribosomes and their subsequent degradation. Probably generates substrates for RQC. This is Endonuclease MutS2 from Clostridium botulinum (strain Eklund 17B / Type B).